We begin with the raw amino-acid sequence, 225 residues long: ATP-dependent Clp protease proteolytic subunit (225 aa).

The active-site Nucleophile is the serine 126. Histidine 151 is an active-site residue.

Belongs to the peptidase S14 family. In terms of assembly, fourteen ClpP subunits assemble into 2 heptameric rings which stack back to back to give a disk-like structure with a central cavity, resembling the structure of eukaryotic proteasomes.

It is found in the cytoplasm. It catalyses the reaction Hydrolysis of proteins to small peptides in the presence of ATP and magnesium. alpha-casein is the usual test substrate. In the absence of ATP, only oligopeptides shorter than five residues are hydrolyzed (such as succinyl-Leu-Tyr-|-NHMec, and Leu-Tyr-Leu-|-Tyr-Trp, in which cleavage of the -Tyr-|-Leu- and -Tyr-|-Trp bonds also occurs).. Functionally, cleaves peptides in various proteins in a process that requires ATP hydrolysis. Has a chymotrypsin-like activity. Plays a major role in the degradation of misfolded proteins. The protein is ATP-dependent Clp protease proteolytic subunit of Psychrobacter arcticus (strain DSM 17307 / VKM B-2377 / 273-4).